The chain runs to 179 residues: MSRIGKMPIPLSNQAKIEINDSIIRVSGPKGSLEQKLTDQVIITEENSALLVRRIDDSKKARAQHGLYRMLINNMVQGVTNGFTTKLEIAGVGFRAEMKGELLALTLGFSHLIYFKAPEGIKLETPDQVTVLISGIDKALVGQVAAKIRSFKKPEPYRGKGIKYSGEVIRRKEGKAAGK.

The protein belongs to the universal ribosomal protein uL6 family. As to quaternary structure, part of the 50S ribosomal subunit.

In terms of biological role, this protein binds to the 23S rRNA, and is important in its secondary structure. It is located near the subunit interface in the base of the L7/L12 stalk, and near the tRNA binding site of the peptidyltransferase center. This is Large ribosomal subunit protein uL6 from Chlorobium chlorochromatii (strain CaD3).